A 150-amino-acid polypeptide reads, in one-letter code: SsrA-binding protein (150 aa).

Residues 129 to 150 (KRQTLKSKEADREMARALRDRH) are disordered.

Belongs to the SmpB family.

The protein localises to the cytoplasm. Its function is as follows. Required for rescue of stalled ribosomes mediated by trans-translation. Binds to transfer-messenger RNA (tmRNA), required for stable association of tmRNA with ribosomes. tmRNA and SmpB together mimic tRNA shape, replacing the anticodon stem-loop with SmpB. tmRNA is encoded by the ssrA gene; the 2 termini fold to resemble tRNA(Ala) and it encodes a 'tag peptide', a short internal open reading frame. During trans-translation Ala-aminoacylated tmRNA acts like a tRNA, entering the A-site of stalled ribosomes, displacing the stalled mRNA. The ribosome then switches to translate the ORF on the tmRNA; the nascent peptide is terminated with the 'tag peptide' encoded by the tmRNA and targeted for degradation. The ribosome is freed to recommence translation, which seems to be the essential function of trans-translation. The sequence is that of SsrA-binding protein from Syntrophotalea carbinolica (strain DSM 2380 / NBRC 103641 / GraBd1) (Pelobacter carbinolicus).